The following is a 335-amino-acid chain: NADH-quinone oxidoreductase subunit H (335 aa).

The next 8 membrane-spanning stretches (helical) occupy residues 11 to 31 (VILT…CGAL), 81 to 101 (MIFT…FVVI), 114 to 134 (IGLL…LFAG), 154 to 174 (VSYE…VGSF), 187 to 207 (LWFI…GVAV), 238 to 258 (FFVG…TLFF), 270 to 290 (QVPF…FILL), and 307 to 327 (WKFC…VVLY).

This sequence belongs to the complex I subunit 1 family. As to quaternary structure, NDH-1 is composed of 13 different subunits. Subunits NuoA, H, J, K, L, M, N constitute the membrane sector of the complex.

It localises to the cell inner membrane. The enzyme catalyses a quinone + NADH + 5 H(+)(in) = a quinol + NAD(+) + 4 H(+)(out). Its function is as follows. NDH-1 shuttles electrons from NADH, via FMN and iron-sulfur (Fe-S) centers, to quinones in the respiratory chain. The immediate electron acceptor for the enzyme in this species is believed to be ubiquinone. Couples the redox reaction to proton translocation (for every two electrons transferred, four hydrogen ions are translocated across the cytoplasmic membrane), and thus conserves the redox energy in a proton gradient. This subunit may bind ubiquinone. The sequence is that of NADH-quinone oxidoreductase subunit H from Pseudomonas entomophila (strain L48).